The sequence spans 170 residues: Shikimate kinase (170 aa).

15–20 lines the ATP pocket; the sequence is GTGKTT. T19 contributes to the Mg(2+) binding site. Residues D37, R61, and G82 each coordinate substrate. ATP is bound at residue R120. Position 138 (R138) interacts with substrate. Q154 contacts ATP.

The protein belongs to the shikimate kinase family. As to quaternary structure, monomer. Requires Mg(2+) as cofactor.

It localises to the cytoplasm. It catalyses the reaction shikimate + ATP = 3-phosphoshikimate + ADP + H(+). Its pathway is metabolic intermediate biosynthesis; chorismate biosynthesis; chorismate from D-erythrose 4-phosphate and phosphoenolpyruvate: step 5/7. Its function is as follows. Catalyzes the specific phosphorylation of the 3-hydroxyl group of shikimic acid using ATP as a cosubstrate. This Staphylococcus epidermidis (strain ATCC 35984 / DSM 28319 / BCRC 17069 / CCUG 31568 / BM 3577 / RP62A) protein is Shikimate kinase.